The primary structure comprises 190 residues: NADH-dependent phenylglyoxylate dehydrogenase subunit gamma (190 aa).

In terms of assembly, dimer of heteropentamers composed of an alpha (PadG), a beta (PadI), a gamma (PadE), a delta (PadF) and an epsilon (PadH) subunit.

The enzyme catalyses phenylglyoxylate + NAD(+) + CoA = benzoyl-CoA + CO2 + NADH. Its activity is regulated as follows. Activated by magnesium ions and thiamine diphosphate. Functionally, involved in the anaerobic metabolism of phenylalanine and phenylacetate. Catalyzes the oxidative decarboxylation of phenylglyoxylate to benzoyl-CoA and CO(2). It can also react slowly with 2-oxo-3-methylbutanoate and use different electron acceptors such as benzyl viologen, methyl viologen, FAD or FMN, but NAD seems to be the physiological electron acceptor. Also catalyzes an isotope exchange between CO(2) and the carboxyl group which proves partial or complete reversibility of the oxidative decarboxylation reaction. In Aromatoleum evansii (Azoarcus evansii), this protein is NADH-dependent phenylglyoxylate dehydrogenase subunit gamma (padE).